A 224-amino-acid polypeptide reads, in one-letter code: Lipoprotein-releasing system ATP-binding protein LolD (224 aa).

Positions 4–224 (YTAKDISKNY…TLLDGSLQEE (221 aa)) constitute an ABC transporter domain. Residue 40–47 (GASGSGKT) coordinates ATP.

It belongs to the ABC transporter superfamily. Lipoprotein translocase (TC 3.A.1.125) family. The complex is composed of two ATP-binding proteins (LolD) and two transmembrane proteins (LolC and LolE).

It localises to the cell inner membrane. Its function is as follows. Part of the ABC transporter complex LolCDE involved in the translocation of mature outer membrane-directed lipoproteins, from the inner membrane to the periplasmic chaperone, LolA. Responsible for the formation of the LolA-lipoprotein complex in an ATP-dependent manner. The polypeptide is Lipoprotein-releasing system ATP-binding protein LolD (Desulfotalea psychrophila (strain LSv54 / DSM 12343)).